Reading from the N-terminus, the 312-residue chain is Olfactory receptor 4F15 (312 aa).

Residues 1–25 (MNGMNHSVVSEFVFMGLTNSREIQL) lie on the Extracellular side of the membrane. The N-linked (GlcNAc...) asparagine glycan is linked to Asn-5. Residues 26 to 49 (LLFVFSLLFYFASMMGNLVIVFTV) traverse the membrane as a helical segment. Over 50-57 (TMDAHLHS) the chain is Cytoplasmic. A helical transmembrane segment spans residues 58–79 (PMYFLLANLSIIDMAFCSITAP). The Extracellular portion of the chain corresponds to 80-100 (KMICDIFKKHKAISFRGCITQ). Cys-97 and Cys-189 are joined by a disulfide. A helical membrane pass occupies residues 101 to 120 (IFFSHALGGTEMVLLIAMAF). Over 121–139 (DRYMAICKPLHYLTIMSPR) the chain is Cytoplasmic. Residues 140–158 (MCLYFLATSSIIGLIHSLV) form a helical membrane-spanning segment. Topologically, residues 159 to 195 (QLVFVVDLPFCGPNIFDSFYCDLPRLLRLACTNTQEL) are extracellular. A helical transmembrane segment spans residues 196 to 219 (EFMVTVNSGLISVGSFVLLVISYI). Residues 220-235 (FILFTVWKHSSGGLAK) are Cytoplasmic-facing. The chain crosses the membrane as a helical span at residues 236–258 (ALSTLSAHVTVVILFFGPLMFFY). The Extracellular portion of the chain corresponds to 259–269 (TWPSPTSHLDK). Residues 270 to 289 (YLAIFDAFITPFLNPVIYTF) form a helical membrane-spanning segment. Residues 290–312 (RNKDMKVAMRRLCSRLAHFTKIL) lie on the Cytoplasmic side of the membrane.

It belongs to the G-protein coupled receptor 1 family.

It localises to the cell membrane. Functionally, odorant receptor. The sequence is that of Olfactory receptor 4F15 (OR4F15) from Homo sapiens (Human).